The chain runs to 139 residues: Transmembrane protein 250 (139 aa).

The next 2 membrane-spanning stretches (helical) occupy residues phenylalanine 56 to leucine 76 and valine 116 to phenylalanine 136.

In terms of assembly, (Microbial infection) Interacts with herpes simplex virus 1/HHV-1 protein CVC2/UL25.

Its subcellular location is the membrane. It is found in the nucleus. It localises to the cytoplasm. May play a role in cell proliferation by promoting progression into S phase. Its function is as follows. (Microbial infection) Promotes human herpes simplex virus 1/HHV-1 proliferation. This is Transmembrane protein 250 from Homo sapiens (Human).